A 269-amino-acid chain; its full sequence is Xyloglucan endotransglucosylase/hydrolase protein 24 (269 aa).

An N-terminal signal peptide occupies residues 1–21; that stretch reads MSPFKIFFFTTLLVAAFSVSA. The region spanning 22 to 212 is the GH16 domain; the sequence is ADFNTDVNVA…WSKAPFMASY (191 aa). E98 acts as the Nucleophile in catalysis. E102 (proton donor) is an active-site residue. E102 is a binding site for xyloglucan. The N-linked (GlcNAc...) asparagine glycan is linked to N106. Xyloglucan is bound by residues 115–117, 125–127, 191–192, G196, and R256; these read HTN, DKE, and DW. Residues C251 and C265 are joined by a disulfide bond.

This sequence belongs to the glycosyl hydrolase 16 family. XTH group 2 subfamily. Post-translationally, contains at least one intrachain disulfide bond essential for its enzymatic activity. N-glycosylated; essential for its enzymatic activity. Highly expressed. Predominantly expressed in stems. Expressed in shoot apical meristems, also found in seedlings and meristems.

The protein resides in the secreted. It is found in the cell wall. It localises to the extracellular space. Its subcellular location is the apoplast. The enzyme catalyses breaks a beta-(1-&gt;4) bond in the backbone of a xyloglucan and transfers the xyloglucanyl segment on to O-4 of the non-reducing terminal glucose residue of an acceptor, which can be a xyloglucan or an oligosaccharide of xyloglucan.. In terms of biological role, catalyzes xyloglucan endohydrolysis (XEH) and/or endotransglycosylation (XET). Cleaves and religates xyloglucan polymers, an essential constituent of the primary cell wall, and thereby participates in cell wall construction of growing tissues. May be required during development to modify the walls of cells under mechanical stress. The protein is Xyloglucan endotransglucosylase/hydrolase protein 24 (XTH24) of Arabidopsis thaliana (Mouse-ear cress).